Here is a 317-residue protein sequence, read N- to C-terminus: Melanocyte-stimulating hormone receptor (317 aa).

Residues 1–37 (MAVQGFQRRLLGSLNSTPTAIPQLGLAANQTGARCLE) are Extracellular-facing. A glycan (N-linked (GlcNAc...) asparagine) is linked at Asn29. A helical membrane pass occupies residues 38 to 63 (VSIPDGLFLSLGLVSLVENVLVVATI). The Cytoplasmic portion of the chain corresponds to 64–72 (AKNRNLHSP). The chain crosses the membrane as a helical span at residues 73 to 93 (TYCFICCLALSDLLVSGGNVL). Over 94–118 (ETVVILLLEASALAARAAVVQPLDN) the chain is Extracellular. Residues 119–140 (VIDVITCSSMVSSLCFLGAIAV) traverse the membrane as a helical segment. Residues 141–163 (DRYVSIFYALRYHSIVTLPRARQ) lie on the Cytoplasmic side of the membrane. The chain crosses the membrane as a helical span at residues 164–183 (AIAAIWVASVLFSTLFIAYY). Residues 184–191 (DHAAVLLC) are Extracellular-facing. A helical transmembrane segment spans residues 192–211 (LVVFFLAMLVXMAVLYVHML). The Cytoplasmic segment spans residues 212–240 (ARACQHAQGIARLHKRQRPLHQGFGLKGA). The chain crosses the membrane as a helical span at residues 241-266 (VTLTILLGIFFLCWGPFFLHLTLIVL). At 267-279 (CPQHPTCSCIFKN) the chain is on the extracellular side. The helical transmembrane segment at 280–300 (FNLFLTLIICNAIIDPLIYAF) threads the bilayer. The Cytoplasmic portion of the chain corresponds to 301 to 317 (RRQELRRTLKEGLTCSW). A lipid anchor (S-palmitoyl cysteine) is attached at Cys315.

This sequence belongs to the G-protein coupled receptor 1 family. In terms of assembly, interacts with MGRN1, but does not undergo MGRN1-mediated ubiquitination; this interaction competes with GNAS-binding and thus inhibits agonist-induced cAMP production. Interacts with OPN3; the interaction results in a decrease in MC1R-mediated cAMP signaling and ultimately a decrease in melanin production in melanocytes.

It is found in the cell membrane. Its function is as follows. Receptor for MSH (alpha, beta and gamma) and ACTH. The activity of this receptor is mediated by G proteins which activate adenylate cyclase. Mediates melanogenesis, the production of eumelanin (black/brown) and phaeomelanin (red/yellow), via regulation of cAMP signaling in melanocytes. The chain is Melanocyte-stimulating hormone receptor (MC1R) from Hylobates muelleri (Mueller's Bornean gibbon).